A 498-amino-acid polypeptide reads, in one-letter code: Glycerol kinase (498 aa).

Residue threonine 11 coordinates ADP. ATP-binding residues include threonine 11, serine 12, and serine 13. Residue threonine 11 coordinates sn-glycerol 3-phosphate. Arginine 15 is a binding site for ADP. The sn-glycerol 3-phosphate site is built by arginine 81, glutamate 82, tyrosine 133, and aspartate 242. Glycerol-binding residues include arginine 81, glutamate 82, tyrosine 133, aspartate 242, and glutamine 243. 2 residues coordinate ADP: threonine 264 and glycine 307. Positions 264, 307, 311, and 412 each coordinate ATP. ADP-binding residues include glycine 412 and asparagine 416.

This sequence belongs to the FGGY kinase family.

The catalysed reaction is glycerol + ATP = sn-glycerol 3-phosphate + ADP + H(+). Its pathway is polyol metabolism; glycerol degradation via glycerol kinase pathway; sn-glycerol 3-phosphate from glycerol: step 1/1. With respect to regulation, inhibited by fructose 1,6-bisphosphate (FBP). Its function is as follows. Key enzyme in the regulation of glycerol uptake and metabolism. Catalyzes the phosphorylation of glycerol to yield sn-glycerol 3-phosphate. This is Glycerol kinase from Acidovorax sp. (strain JS42).